Reading from the N-terminus, the 112-residue chain is UPF0060 membrane protein IL2332 (112 aa).

4 helical membrane passes run 10–30 (LGLFFITAIAEIIGCYLPYLW), 36–56 (SAWLLIPAAISLAVFAWLLTL), 64–84 (VYAAYGGVYVVTALLWLKAVE), and 90–110 (TYDAVGAAFTLTGMAIIAVGW).

It belongs to the UPF0060 family.

The protein localises to the cell inner membrane. The sequence is that of UPF0060 membrane protein IL2332 from Idiomarina loihiensis (strain ATCC BAA-735 / DSM 15497 / L2-TR).